The sequence spans 216 residues: Sugar transporter SWEET1 (216 aa).

Transmembrane regions (helical) follow at residues 3-23 (WMWL…SSGL), 36-56 (ENIQ…WFYY), 65-85 (LMIV…AYLL), 96-116 (QVLV…LWIL), 125-145 (LGLF…ADLA), 157-177 (SFPL…YGLV), and 181-201 (LYIT…FWLF). In terms of domain architecture, MtN3/slv 1 spans 6–90 (LLSGACIVFT…GAYLLYSPER (85 aa)). The MtN3/slv 2 domain occupies 124-206 (QLGLFCSVFT…RFWLFSQFPP (83 aa)).

It belongs to the SWEET sugar transporter family.

Its subcellular location is the golgi apparatus membrane. The protein localises to the cell membrane. Its function is as follows. Mediates sugar transport across membranes. The sequence is that of Sugar transporter SWEET1 (slc50a1) from Xenopus laevis (African clawed frog).